The primary structure comprises 468 residues: Glycosyl hydrolase family 109 protein (468 aa).

Residues 1–19 form the signal peptide; the sequence is MVYKVFLSLCIGLALSASA. NAD(+)-binding positions include 67 to 68, Asp89, 138 to 141, 158 to 159, and Asn187; these read MR, WKTH, and EV. Substrate-binding positions include Tyr216, Arg232, 244-247, and Tyr322; that span reads YATH. Residue Tyr244 participates in NAD(+) binding.

It belongs to the Gfo/Idh/MocA family. Glycosyl hydrolase 109 subfamily. NAD(+) serves as cofactor.

Functionally, glycosidase. This Porphyromonas gingivalis (strain ATCC BAA-308 / W83) protein is Glycosyl hydrolase family 109 protein.